The following is a 490-amino-acid chain: Sec sixty-one protein homolog (490 aa).

At 1–32 (MSGFRLIDIVKPILPILPEVELPFEKLPFDDK) the chain is on the cytoplasmic side. Residues 33–53 (IVYTIFAGLIYLFAQFPLVGL) form a helical membrane-spanning segment. Topologically, residues 54-121 (PKATTPNVND…DRELFQSLTK (68 aa)) are lumenal. A helical membrane pass occupies residues 122 to 142 (VFAIVQYVILTNIFIFAGYFG). The Cytoplasmic segment spans residues 143–146 (DDLS). The helical transmembrane segment at 147–167 (VVQIGLINFQLVGAGIFTTLL) threads the bilayer. Residues 168–174 (AEVIDKG) lie on the Lumenal side of the membrane. The helical transmembrane segment at 175–195 (FGFSSGAMIINTVVIATNLVA) threads the bilayer. The Cytoplasmic portion of the chain corresponds to 196-242 (DTFGVSQIKVGEDDQTEAQGALINLIQGLRSKHKTFIGGIISAFNRD). Residues 243–263 (YLPNLTTTIIVLAIAIIVCYL) form a helical membrane-spanning segment. Residues 264–293 (QSVRVELPIRSTRARGTNNVYPIKLLYTGC) are Lumenal-facing. The helical transmembrane segment at 294–314 (LSVLFSYTILFYIHIFAFVLI) threads the bilayer. Topologically, residues 315 to 339 (QLVAKNEPTHIICKIMGHYENANNL) are cytoplasmic. The chain crosses the membrane as a helical span at residues 340-360 (LAVPTFPLSLLAPPTSFFKGV). Thr-361 is a topological domain (lumenal). Residues 362 to 382 (QQPLTFITYSAFILVTGIWFA) traverse the membrane as a helical segment. Residues 383 to 421 (DKWQAISGSSARDVALEFKDQGITLMGRREQNVAKELNK) are Cytoplasmic-facing. The helical transmembrane segment at 422–442 (VIPIAAVTGASVLSLITVIGE) threads the bilayer. Over 443–449 (SLGLKGK) the chain is Lumenal. A helical membrane pass occupies residues 450 to 470 (AAGIVVGIAGGFSLLEVITIE). The Cytoplasmic portion of the chain corresponds to 471 to 490 (YQQSGGQSALNQVLGVPGAM).

This sequence belongs to the SecY/SEC61-alpha family. Component of the heterotrimeric Ssh1 complex, which is composed of SSH1, SBH2 and SSS1.

Its subcellular location is the endoplasmic reticulum membrane. Its function is as follows. Part of the Ssh1 complex, which probably is the major component of a channel-forming translocon complex that may function exclusively in the cotranslational pathway of protein endoplasmic reticulum (ER) import. The polypeptide is Sec sixty-one protein homolog (SSH1) (Saccharomyces cerevisiae (strain ATCC 204508 / S288c) (Baker's yeast)).